Consider the following 283-residue polypeptide: DegV domain-containing protein lmo2514 (283 aa).

Residues 5–282 (IAVVTDSTTY…EGALGLTWSI (278 aa)) enclose the DegV domain. Hexadecanoate contacts are provided by serine 63 and serine 96.

Functionally, may bind long-chain fatty acids, such as palmitate, and may play a role in lipid transport or fatty acid metabolism. This chain is DegV domain-containing protein lmo2514, found in Listeria monocytogenes serovar 1/2a (strain ATCC BAA-679 / EGD-e).